Here is a 225-residue protein sequence, read N- to C-terminus: Peptidyl-tRNA hydrolase (225 aa).

Position 14 (tyrosine 14) interacts with tRNA. Residue histidine 19 is the Proton acceptor of the active site. The tRNA site is built by phenylalanine 64, asparagine 66, and asparagine 112. Residues 182–225 form a disordered region; that stretch reads AVALRMQPPKPEKPKPAAKAPEAQAPEAAPDERSALQKLADRFR. Positions 198–209 are enriched in low complexity; the sequence is AAKAPEAQAPEA. The segment covering 211-225 has biased composition (basic and acidic residues); that stretch reads PDERSALQKLADRFR.

This sequence belongs to the PTH family. In terms of assembly, monomer.

It localises to the cytoplasm. It catalyses the reaction an N-acyl-L-alpha-aminoacyl-tRNA + H2O = an N-acyl-L-amino acid + a tRNA + H(+). Its function is as follows. Hydrolyzes ribosome-free peptidyl-tRNAs (with 1 or more amino acids incorporated), which drop off the ribosome during protein synthesis, or as a result of ribosome stalling. Catalyzes the release of premature peptidyl moieties from peptidyl-tRNA molecules trapped in stalled 50S ribosomal subunits, and thus maintains levels of free tRNAs and 50S ribosomes. This chain is Peptidyl-tRNA hydrolase, found in Cereibacter sphaeroides (strain ATCC 17029 / ATH 2.4.9) (Rhodobacter sphaeroides).